The primary structure comprises 216 residues: Maleylacetoacetate isomerase (216 aa).

N-acetylmethionine is present on Met1. A GST N-terminal domain is found at 4–87; it reads GKPILYSYFR…YLEETRPIPR (84 aa). Glutathione is bound by residues 14–19 and Gln45; that span reads SSCSWR. The residue at position 57 (Lys57) is an N6-succinyllysine. Residues Val59, 71–72, Gln111, and 115–117 each bind glutathione; these read QS and NLS. The 121-residue stretch at 92–212 folds into the GST C-terminal domain; it reads DPQKRAIVRM…HPRRQPDTPA (121 aa). Phosphothreonine is present on Thr136. Phosphoserine is present on Ser137. Lys177 carries the N6-succinyllysine modification. Ser181 is subject to Phosphoserine.

It belongs to the GST superfamily. Zeta family. Homodimer. Requires glutathione as cofactor. Expressed in liver, kidney, seminal glands and breast.

Its subcellular location is the cytoplasm. The enzyme catalyses 4-maleylacetoacetate = 4-fumarylacetoacetate. The catalysed reaction is RX + glutathione = an S-substituted glutathione + a halide anion + H(+). Its pathway is amino-acid degradation; L-phenylalanine degradation; acetoacetate and fumarate from L-phenylalanine: step 5/6. Probable bifunctional enzyme showing minimal glutathione-conjugating activity with ethacrynic acid and 7-chloro-4-nitrobenz-2-oxa-1, 3-diazole and maleylacetoacetate isomerase activity. Also has low glutathione peroxidase activity with t-butyl and cumene hydroperoxides. Is able to catalyze the glutathione dependent oxygenation of dichloroacetic acid to glyoxylic acid. This Mus musculus (Mouse) protein is Maleylacetoacetate isomerase (Gstz1).